We begin with the raw amino-acid sequence, 268 residues long: MLADIIRAIILGVVEGVTEFLPVSSTGHLLLAERFFNLGEGPFWKSFAVLIQLGAILAILALYFSKLWNIARGMFSDPAAQRFVIGVLVAFLPAAVIGAASGGLIKEYLFNPWVVCFTLILGGGILLWVDQLELKPVHHEATEFPLPMYLIIGFAQCIAMFPGVSRSGATIVGAMLLGADRRAAAEFSFFLAIPTMLGAFVYDLYKSRADMTMDHGLIVAVGFAVSFITAIIVVKTFLTYVTRHGFALFAWWRVIVGTLGLIALALGR.

The next 7 helical transmembrane spans lie at 47–67 (FAVL…FSKL), 85–105 (IGVL…GGLI), 109–129 (LFNP…LLWV), 144–164 (FPLP…FPGV), 184–204 (AAEF…VYDL), 217–237 (LIVA…VKTF), and 246–266 (FALF…ALAL).

This sequence belongs to the UppP family.

The protein localises to the cell inner membrane. It catalyses the reaction di-trans,octa-cis-undecaprenyl diphosphate + H2O = di-trans,octa-cis-undecaprenyl phosphate + phosphate + H(+). Catalyzes the dephosphorylation of undecaprenyl diphosphate (UPP). Confers resistance to bacitracin. This Rhodopseudomonas palustris (strain BisA53) protein is Undecaprenyl-diphosphatase.